Consider the following 459-residue polypeptide: Trigger factor (459 aa).

Positions 161–246 (GDKVVIDFQG…IKKIMEGKLP (86 aa)) constitute a PPIase FKBP-type domain.

It belongs to the FKBP-type PPIase family. Tig subfamily.

It localises to the cytoplasm. It carries out the reaction [protein]-peptidylproline (omega=180) = [protein]-peptidylproline (omega=0). Functionally, involved in protein export. Acts as a chaperone by maintaining the newly synthesized protein in an open conformation. Functions as a peptidyl-prolyl cis-trans isomerase. In Legionella pneumophila (strain Corby), this protein is Trigger factor.